A 125-amino-acid chain; its full sequence is SOSS complex subunit C homolog A (125 aa).

Residues methionine 1–lysine 16 show a composition bias toward polar residues. Disordered stretches follow at residues methionine 1–glutamate 20, serine 38–asparagine 74, and proline 105–lysine 125.

Belongs to the SOSS-C family.

In Drosophila willistoni (Fruit fly), this protein is SOSS complex subunit C homolog A.